The primary structure comprises 118 residues: Large ribosomal subunit protein bL19 (118 aa).

It belongs to the bacterial ribosomal protein bL19 family.

Its function is as follows. This protein is located at the 30S-50S ribosomal subunit interface and may play a role in the structure and function of the aminoacyl-tRNA binding site. This is Large ribosomal subunit protein bL19 from Beutenbergia cavernae (strain ATCC BAA-8 / DSM 12333 / CCUG 43141 / JCM 11478 / NBRC 16432 / NCIMB 13614 / HKI 0122).